A 190-amino-acid polypeptide reads, in one-letter code: Large ribosomal subunit protein uL5 (190 aa).

The protein belongs to the universal ribosomal protein uL5 family. Part of the 50S ribosomal subunit; part of the 5S rRNA/L5/L18/L25 subcomplex. Contacts the 5S rRNA and the P site tRNA. Forms a bridge to the 30S subunit in the 70S ribosome.

In terms of biological role, this is one of the proteins that bind and probably mediate the attachment of the 5S RNA into the large ribosomal subunit, where it forms part of the central protuberance. In the 70S ribosome it contacts protein S13 of the 30S subunit (bridge B1b), connecting the 2 subunits; this bridge is implicated in subunit movement. Contacts the P site tRNA; the 5S rRNA and some of its associated proteins might help stabilize positioning of ribosome-bound tRNAs. This chain is Large ribosomal subunit protein uL5, found in Corynebacterium efficiens (strain DSM 44549 / YS-314 / AJ 12310 / JCM 11189 / NBRC 100395).